Here is a 364-residue protein sequence, read N- to C-terminus: 4-hydroxythreonine-4-phosphate dehydrogenase (364 aa).

His-148 and Thr-149 together coordinate substrate. Residues His-177, His-216, and His-301 each contribute to the a divalent metal cation site. Positions 309, 318, and 327 each coordinate substrate.

This sequence belongs to the PdxA family. As to quaternary structure, homodimer. Requires Zn(2+) as cofactor. The cofactor is Mg(2+). Co(2+) serves as cofactor.

It localises to the cytoplasm. The enzyme catalyses 4-(phosphooxy)-L-threonine + NAD(+) = 3-amino-2-oxopropyl phosphate + CO2 + NADH. It functions in the pathway cofactor biosynthesis; pyridoxine 5'-phosphate biosynthesis; pyridoxine 5'-phosphate from D-erythrose 4-phosphate: step 4/5. Catalyzes the NAD(P)-dependent oxidation of 4-(phosphooxy)-L-threonine (HTP) into 2-amino-3-oxo-4-(phosphooxy)butyric acid which spontaneously decarboxylates to form 3-amino-2-oxopropyl phosphate (AHAP). This is 4-hydroxythreonine-4-phosphate dehydrogenase from Campylobacter jejuni subsp. jejuni serotype O:2 (strain ATCC 700819 / NCTC 11168).